The sequence spans 406 residues: Cysteine desulfurase (406 aa).

N6-(pyridoxal phosphate)lysine is present on K226. C364 acts as the Cysteine persulfide intermediate in catalysis.

The protein belongs to the class-V pyridoxal-phosphate-dependent aminotransferase family. Csd subfamily. In terms of assembly, homodimer. Interacts with SufE and the SufBCD complex composed of SufB, SufC and SufD. The interaction with SufE is required to mediate the direct transfer of the sulfur atom from the S-sulfanylcysteine. It depends on pyridoxal 5'-phosphate as a cofactor.

The protein resides in the cytoplasm. The enzyme catalyses (sulfur carrier)-H + L-cysteine = (sulfur carrier)-SH + L-alanine. The catalysed reaction is L-selenocysteine + AH2 = hydrogenselenide + L-alanine + A + H(+). The protein operates within cofactor biosynthesis; iron-sulfur cluster biosynthesis. Functionally, cysteine desulfurases mobilize the sulfur from L-cysteine to yield L-alanine, an essential step in sulfur metabolism for biosynthesis of a variety of sulfur-containing biomolecules. Component of the suf operon, which is activated and required under specific conditions such as oxidative stress and iron limitation. Acts as a potent selenocysteine lyase in vitro, that mobilizes selenium from L-selenocysteine. Selenocysteine lyase activity is however unsure in vivo. This chain is Cysteine desulfurase, found in Escherichia coli (strain SE11).